Consider the following 88-residue polypeptide: Secretion system apparatus protein SsaS (88 aa).

Helical transmembrane passes span 15–35 and 55–75; these read WIVL…GVIV and LLAI…ILLN.

This sequence belongs to the FliQ/MopD/SpaQ family.

It localises to the cell membrane. Part of a type III secretion system. The polypeptide is Secretion system apparatus protein SsaS (ssaS) (Salmonella typhimurium (strain LT2 / SGSC1412 / ATCC 700720)).